Reading from the N-terminus, the 537-residue chain is Putative cysteine ligase BshC (537 aa).

It belongs to the BshC family.

Its function is as follows. Involved in bacillithiol (BSH) biosynthesis. May catalyze the last step of the pathway, the addition of cysteine to glucosamine malate (GlcN-Mal) to generate BSH. In Staphylococcus saprophyticus subsp. saprophyticus (strain ATCC 15305 / DSM 20229 / NCIMB 8711 / NCTC 7292 / S-41), this protein is Putative cysteine ligase BshC.